A 435-amino-acid polypeptide reads, in one-letter code: Adenylosuccinate synthetase (435 aa).

Residues 11–17 (GDEGKGK) and 39–41 (GHT) each bind GTP. Asp12 functions as the Proton acceptor in the catalytic mechanism. Asp12 and Gly39 together coordinate Mg(2+). IMP-binding positions include 12 to 15 (DEGK), 37 to 40 (NAGH), Thr134, Arg148, Asn230, Thr245, and Arg309. His40 functions as the Proton donor in the catalytic mechanism. 305 to 311 (VTTGRKR) serves as a coordination point for substrate. GTP-binding positions include Arg311, 337 to 339 (KLD), and 419 to 421 (GTG).

Belongs to the adenylosuccinate synthetase family. As to quaternary structure, homodimer. The cofactor is Mg(2+).

Its subcellular location is the cytoplasm. It catalyses the reaction IMP + L-aspartate + GTP = N(6)-(1,2-dicarboxyethyl)-AMP + GDP + phosphate + 2 H(+). Its pathway is purine metabolism; AMP biosynthesis via de novo pathway; AMP from IMP: step 1/2. Its function is as follows. Plays an important role in the de novo pathway and in the salvage pathway of purine nucleotide biosynthesis. Catalyzes the first committed step in the biosynthesis of AMP from IMP. This chain is Adenylosuccinate synthetase, found in Zygosaccharomyces rouxii (strain ATCC 2623 / CBS 732 / NBRC 1130 / NCYC 568 / NRRL Y-229).